A 277-amino-acid polypeptide reads, in one-letter code: Large ribosomal subunit protein uL15c (277 aa).

A chloroplast-targeting transit peptide spans 1-67 (MATPLSISSN…FARPLVVVSQ (67 aa)). At T68 the chain carries N-acetylthreonine. A disordered region spans residues 81-125 (FRLDNLGPQPGSRKKQKRKGRGISAGQGASCGFGMRGQKSRSGPG). The segment covering 92–101 (SRKKQKRKGR) has biased composition (basic residues). A compositionally biased stretch (gly residues) spans 103-115 (ISAGQGASCGFGM).

It belongs to the universal ribosomal protein uL15 family. In terms of assembly, part of the 50S ribosomal subunit.

The protein resides in the plastid. It localises to the chloroplast. The polypeptide is Large ribosomal subunit protein uL15c (RPL15) (Arabidopsis thaliana (Mouse-ear cress)).